The following is a 131-amino-acid chain: Fumarate reductase subunit C (131 aa).

The next 3 membrane-spanning stretches (helical) occupy residues 30–50 (EGTAVPAVWFSIELIFGLFAL), 63–83 (FLQNPVIVIINLITLAAALLH), and 109–129 (IIKSLWAVTVVATIVILFVAL).

This sequence belongs to the FrdC family. In terms of assembly, part of an enzyme complex containing four subunits: a flavoprotein (FrdA), an iron-sulfur protein (FrdB), and two hydrophobic anchor proteins (FrdC and FrdD).

It localises to the cell inner membrane. Two distinct, membrane-bound, FAD-containing enzymes are responsible for the catalysis of fumarate and succinate interconversion; fumarate reductase is used in anaerobic growth, and succinate dehydrogenase is used in aerobic growth. Anchors the catalytic components of the fumarate reductase complex to the cell inner membrane, binds quinones. The sequence is that of Fumarate reductase subunit C from Shigella boydii serotype 4 (strain Sb227).